Reading from the N-terminus, the 193-residue chain is Acyl carrier protein phosphodiesterase (193 aa).

This sequence belongs to the AcpH family.

The enzyme catalyses holo-[ACP] + H2O = apo-[ACP] + (R)-4'-phosphopantetheine + H(+). Its function is as follows. Converts holo-ACP to apo-ACP by hydrolytic cleavage of the phosphopantetheine prosthetic group from ACP. In Escherichia coli O127:H6 (strain E2348/69 / EPEC), this protein is Acyl carrier protein phosphodiesterase.